The chain runs to 520 residues: DNA mismatch repair protein MutL (520 aa).

This sequence belongs to the DNA mismatch repair MutL/HexB family.

Functionally, this protein is involved in the repair of mismatches in DNA. It is required for dam-dependent methyl-directed DNA mismatch repair. May act as a 'molecular matchmaker', a protein that promotes the formation of a stable complex between two or more DNA-binding proteins in an ATP-dependent manner without itself being part of a final effector complex. This chain is DNA mismatch repair protein MutL, found in Persephonella marina (strain DSM 14350 / EX-H1).